Here is a 251-residue protein sequence, read N- to C-terminus: PF03932 family protein CutC (251 aa).

Belongs to the CutC family.

The protein localises to the cytoplasm. This Bacteroides fragilis (strain YCH46) protein is PF03932 family protein CutC.